A 539-amino-acid chain; its full sequence is Chaperonin GroEL (539 aa).

ATP is bound by residues 29–32, 86–90, G413, 476–478, and D492; these read TLGP, DGTTT, and NAA.

This sequence belongs to the chaperonin (HSP60) family. Forms a cylinder of 14 subunits composed of two heptameric rings stacked back-to-back. Interacts with the co-chaperonin GroES.

Its subcellular location is the cytoplasm. It catalyses the reaction ATP + H2O + a folded polypeptide = ADP + phosphate + an unfolded polypeptide.. Functionally, together with its co-chaperonin GroES, plays an essential role in assisting protein folding. The GroEL-GroES system forms a nano-cage that allows encapsulation of the non-native substrate proteins and provides a physical environment optimized to promote and accelerate protein folding. The protein is Chaperonin GroEL of Parageobacillus thermoglucosidasius (Geobacillus thermoglucosidasius).